A 197-amino-acid chain; its full sequence is Nucleoid occlusion factor SlmA (197 aa).

The 61-residue stretch at 7 to 67 (INRREHILQC…GLIEFIEDAI (61 aa)) folds into the HTH tetR-type domain. The H-T-H motif DNA-binding region spans 30–49 (TTAKLAAEVGVSEAALYRHF).

The protein belongs to the nucleoid occlusion factor SlmA family. As to quaternary structure, homodimer. Interacts with FtsZ.

Its subcellular location is the cytoplasm. The protein localises to the nucleoid. In terms of biological role, required for nucleoid occlusion (NO) phenomenon, which prevents Z-ring formation and cell division over the nucleoid. Acts as a DNA-associated cell division inhibitor that binds simultaneously chromosomal DNA and FtsZ, and disrupts the assembly of FtsZ polymers. SlmA-DNA-binding sequences (SBS) are dispersed on non-Ter regions of the chromosome, preventing FtsZ polymerization at these regions. This chain is Nucleoid occlusion factor SlmA, found in Shewanella denitrificans (strain OS217 / ATCC BAA-1090 / DSM 15013).